The sequence spans 260 residues: Ubiquinone/menaquinone biosynthesis C-methyltransferase UbiE (260 aa).

Residues T83, D104, and 132–133 (NA) contribute to the S-adenosyl-L-methionine site.

It belongs to the class I-like SAM-binding methyltransferase superfamily. MenG/UbiE family.

The enzyme catalyses a 2-demethylmenaquinol + S-adenosyl-L-methionine = a menaquinol + S-adenosyl-L-homocysteine + H(+). It catalyses the reaction a 2-methoxy-6-(all-trans-polyprenyl)benzene-1,4-diol + S-adenosyl-L-methionine = a 5-methoxy-2-methyl-3-(all-trans-polyprenyl)benzene-1,4-diol + S-adenosyl-L-homocysteine + H(+). The protein operates within quinol/quinone metabolism; menaquinone biosynthesis; menaquinol from 1,4-dihydroxy-2-naphthoate: step 2/2. Its pathway is cofactor biosynthesis; ubiquinone biosynthesis. Its function is as follows. Methyltransferase required for the conversion of demethylmenaquinol (DMKH2) to menaquinol (MKH2) and the conversion of 2-polyprenyl-6-methoxy-1,4-benzoquinol (DDMQH2) to 2-polyprenyl-3-methyl-6-methoxy-1,4-benzoquinol (DMQH2). This is Ubiquinone/menaquinone biosynthesis C-methyltransferase UbiE from Bartonella quintana (strain Toulouse) (Rochalimaea quintana).